Consider the following 268-residue polypeptide: MILDVIVEDKLKRLPEHKKRISEEEMTRLAIESQRVSHSFYDALAKDGLSIISEFKKASPSHGNMNNKITLEKRIKQYGESADAISCLTEEDHFKGSTEYLKQIRQMTDLPIIRKDFIIDPYQVYEAKVIGADAVLLIAAILDDSRFKELYDLAYSLGLDVLCEVHNEEEMQRMLNLDVKIIGINNRNLKTFEVDLDTTKKLADMVTPEMRKAGKLLVSESGVADTDDIKVLAKSGADALLIGTVLMEAPKPEELISEFKEVYNAERK.

It belongs to the TrpC family.

The enzyme catalyses 1-(2-carboxyphenylamino)-1-deoxy-D-ribulose 5-phosphate + H(+) = (1S,2R)-1-C-(indol-3-yl)glycerol 3-phosphate + CO2 + H2O. Its pathway is amino-acid biosynthesis; L-tryptophan biosynthesis; L-tryptophan from chorismate: step 4/5. The polypeptide is Indole-3-glycerol phosphate synthase (Lachnospira eligens (strain ATCC 27750 / DSM 3376 / VPI C15-48 / C15-B4) (Eubacterium eligens)).